The sequence spans 492 residues: MTLWINGDWITGQGALRVRRNPVSGEVLWQGNDADAAQVEQACRAARAAFPRWARLSFAERQAVVERFAGLLERNKGELTAIIARETGKPRWEAATEVTAMINKIAISIKAYHVRTGEQRSEMPDGAASLRHRPHGVLAVFGPYNFPGHLPNGHIVPALLAGNTIIFKPSELTPWSGEAVMRLWQQAGLPPGVLNLVQGGRETGQALSALEDLDGLLFTGSANTGYQLRRQLSGQPEKILALEMGGNNPLIIDEVADIDAAVHLTIQSAFVTAGQRCTCARRLLLKSGAQGDAFLARLVAVSQRLTPGNWDDEPQPFIGGLISEQAAQQVVTAWQQLEAMGGRTLLAPRLLQSETSLLTPGIIEMTGVAGVPDEEVFGPLLRVWRYDSFEEAILMANNTRFGLSCGLVSPEREKFDQLLLEARAGIVNWNKPLTGAASTAPFGGIGASGNHRPSAWYAADYCAWPMASLESDSLTLPATLNPGLDFSDEVVR.

220–225 (GSANTG) is an NAD(+) binding site. Catalysis depends on residues glutamate 243 and cysteine 277.

It belongs to the aldehyde dehydrogenase family. AstD subfamily.

It carries out the reaction N-succinyl-L-glutamate 5-semialdehyde + NAD(+) + H2O = N-succinyl-L-glutamate + NADH + 2 H(+). Its pathway is amino-acid degradation; L-arginine degradation via AST pathway; L-glutamate and succinate from L-arginine: step 4/5. Functionally, catalyzes the NAD-dependent reduction of succinylglutamate semialdehyde into succinylglutamate. This Escherichia coli (strain ATCC 8739 / DSM 1576 / NBRC 3972 / NCIMB 8545 / WDCM 00012 / Crooks) protein is N-succinylglutamate 5-semialdehyde dehydrogenase.